Consider the following 311-residue polypeptide: Glycine--tRNA ligase alpha subunit (311 aa).

Belongs to the class-II aminoacyl-tRNA synthetase family. In terms of assembly, tetramer of two alpha and two beta subunits.

It localises to the cytoplasm. It catalyses the reaction tRNA(Gly) + glycine + ATP = glycyl-tRNA(Gly) + AMP + diphosphate. The protein is Glycine--tRNA ligase alpha subunit of Rhizobium meliloti (strain 1021) (Ensifer meliloti).